Consider the following 309-residue polypeptide: Porphobilinogen deaminase (309 aa).

At cysteine 241 the chain carries S-(dipyrrolylmethanemethyl)cysteine.

The protein belongs to the HMBS family. As to quaternary structure, monomer. Requires dipyrromethane as cofactor.

The enzyme catalyses 4 porphobilinogen + H2O = hydroxymethylbilane + 4 NH4(+). It functions in the pathway porphyrin-containing compound metabolism; protoporphyrin-IX biosynthesis; coproporphyrinogen-III from 5-aminolevulinate: step 2/4. In terms of biological role, tetrapolymerization of the monopyrrole PBG into the hydroxymethylbilane pre-uroporphyrinogen in several discrete steps. This is Porphobilinogen deaminase from Bacillus cereus (strain AH187).